A 471-amino-acid polypeptide reads, in one-letter code: MSPTDASPVVTRFAPSPTGYLHIGGARTALFNWLYARGRGGKFLLRIEDTDKARSTAEATEAIFAGLRWLGLDWDGDAVSQAEGAARHAQVARALQEAGKAYKCFTTQDEIAAFREAARAEGRSTLFRSPWRDADPASHPDAPYVIRIKAPQEGTTVIADQVQGDVRIRNDQLDDMILLRSDGSPVYMLAVVVDDHDMGVTHVIRGDDHLNNAARQMMIYDAMGWDMPVFAHIPLIHGPDGKKLSKRHGALGVEEYQAMGYPAQAMRNYLARLGWSHGDDEFFGDAQAQAWFDLDGIGKSPARLDLKKLDNLSGQHLGVMADEAIVAGAQGYLAATGAPPLTEAQETGLSRAMYCLKDRAKKFPDLLEKAHFILASRPIDPDPKAAKSLDTVSRGILAELTPQLQNASWTRDTLEGVVGGLAEAHGLGLGKLAAPLRAALAGRSATPSVFDMMLVLGRDETLARLSDATSA.

A 'HIGH' region motif is present at residues 15-25 (PSPTGYLHIGG). The 'KMSKS' region signature appears at 243-247 (KLSKR). Lys246 is an ATP binding site.

It belongs to the class-I aminoacyl-tRNA synthetase family. Glutamate--tRNA ligase type 1 subfamily. Monomer.

The protein localises to the cytoplasm. It carries out the reaction tRNA(Glu) + L-glutamate + ATP = L-glutamyl-tRNA(Glu) + AMP + diphosphate. In terms of biological role, catalyzes the attachment of glutamate to tRNA(Glu) in a two-step reaction: glutamate is first activated by ATP to form Glu-AMP and then transferred to the acceptor end of tRNA(Glu). This chain is Glutamate--tRNA ligase 1, found in Dinoroseobacter shibae (strain DSM 16493 / NCIMB 14021 / DFL 12).